The sequence spans 501 residues: Aminoaldehyde dehydrogenase ALDH10A8, chloroplastic (501 aa).

Positions 99 and 189 each coordinate Na(+). Residues 238 to 243 (GSFATG) and 238 to 245 (GSFATGSK) each bind NAD(+). Glu260 functions as the Proton acceptor in the catalytic mechanism. NAD(+)-binding residues include Cys294 and Glu393. The Nucleophile role is filled by Cys294.

Belongs to the aldehyde dehydrogenase family. As to quaternary structure, homodimer. Widely expressed.

It localises to the cytoplasm. It is found in the plastid. The protein localises to the chloroplast. The enzyme catalyses 4-aminobutanal + NAD(+) + H2O = 4-aminobutanoate + NADH + 2 H(+). The catalysed reaction is 3-aminopropanal + NAD(+) + H2O = beta-alanine + NADH + 2 H(+). It carries out the reaction 4-(trimethylamino)butanal + NAD(+) + H2O = 4-(trimethylamino)butanoate + NADH + 2 H(+). It catalyses the reaction 4-guanidinobutanal + NAD(+) + H2O = 4-guanidinobutanoate + NADH + 2 H(+). The enzyme catalyses betaine aldehyde + NAD(+) + H2O = glycine betaine + NADH + 2 H(+). It functions in the pathway amine and polyamine biosynthesis; betaine biosynthesis via choline pathway; betaine from betaine aldehyde: step 1/1. Dehydrogenase that catalyzes the oxidation of several aminoaldehydes. Metabolizes and detoxifies aldehyde products of polyamine degradation to non-toxic amino acids. Catalyzes the oxidation of 4-aminobutanal and 3-aminopropanal to 4-aminobutanoate and beta-alanine, respectively. Production of 4-aminobutinoate by ALDH10A8 may confer tolerance to salt stress. Catalyzes the oxidation of 4-(trimethylamino)butanal and 4-guanidinobutanal to 4-trimethylammoniobutanoate and 4-guanidinobutanoate, respectively. Involved in glycine betaine biosynthesis. Catalyzes with low efficiency the oxidation of betaine aldehyde to glycine betaine. This is Aminoaldehyde dehydrogenase ALDH10A8, chloroplastic from Arabidopsis thaliana (Mouse-ear cress).